The following is a 197-amino-acid chain: MAEPVEDSVDEISSEGDSDVEESKGPEGSAPKNRQDKNERKSRKLLGKLGMKPVDGVTKVCIKKSKQIYFVVNKPDVYKLPNSDTYVIFGEAKVEDMSQNSALEAAQRLSQLSSALQAVGADRGTDSSAAAHASGHDHAHDHDHSHGDCASKADESSVNQSDIDLVVSQVGCTREQAVEALIKNKGDIVETIMQLST.

Residues 1 to 20 (MAEPVEDSVDEISSEGDSDV) show a composition bias toward acidic residues. Disordered regions lie at residues 1 to 46 (MAEP…RKLL) and 120 to 154 (GADR…SKAD). The NAC-A/B domain maps to 36 to 101 (DKNERKSRKL…AKVEDMSQNS (66 aa)). A compositionally biased stretch (basic and acidic residues) spans 134 to 154 (SGHDHAHDHDHSHGDCASKAD). The 38-residue stretch at 158–195 (VNQSDIDLVVSQVGCTREQAVEALIKNKGDIVETIMQL) folds into the UBA domain.

Belongs to the NAC-alpha family.

May promote appropriate targeting of ribosome-nascent polypeptide complexes. In Babesia divergens, this protein is Nascent polypeptide-associated complex subunit alpha.